The chain runs to 513 residues: ATP synthase subunit alpha (513 aa).

169-176 (GDRQTGKT) is a binding site for ATP.

This sequence belongs to the ATPase alpha/beta chains family. F-type ATPases have 2 components, CF(1) - the catalytic core - and CF(0) - the membrane proton channel. CF(1) has five subunits: alpha(3), beta(3), gamma(1), delta(1), epsilon(1). CF(0) has three main subunits: a(1), b(2) and c(9-12). The alpha and beta chains form an alternating ring which encloses part of the gamma chain. CF(1) is attached to CF(0) by a central stalk formed by the gamma and epsilon chains, while a peripheral stalk is formed by the delta and b chains.

It is found in the cell inner membrane. The enzyme catalyses ATP + H2O + 4 H(+)(in) = ADP + phosphate + 5 H(+)(out). Produces ATP from ADP in the presence of a proton gradient across the membrane. The alpha chain is a regulatory subunit. This Salmonella paratyphi C (strain RKS4594) protein is ATP synthase subunit alpha.